The chain runs to 859 residues: Linoleate 9S-lipoxygenase B (859 aa).

One can recognise a PLAT domain in the interval Ile34–Ala158. Residues Ala161–Ile859 form the Lipoxygenase domain. Residues Glu213–Ser246 form a disordered region. The segment covering Thr233 to Cys244 has biased composition (basic and acidic residues). His521, His526, His711, and Ile859 together coordinate Fe cation.

Belongs to the lipoxygenase family. Monomer. Fe cation serves as cofactor. Fruit specific.

The protein localises to the cytoplasm. The enzyme catalyses (9Z,12Z)-octadecadienoate + O2 = (9S)-hydroperoxy-(10E,12Z)-octadecadienoate. It functions in the pathway lipid metabolism; oxylipin biosynthesis. Functionally, plant lipoxygenase may be involved in a number of diverse aspects of plant physiology including growth and development, pest resistance, and senescence or responses to wounding. It catalyzes the hydroperoxidation of lipids containing a cis,cis-1,4-pentadiene structure. In Solanum lycopersicum (Tomato), this protein is Linoleate 9S-lipoxygenase B (LOX1.2).